The primary structure comprises 746 residues: UvrABC system protein C (746 aa).

One can recognise a GIY-YIG domain in the interval 18-97 (AKPGVYKWRD…IKEFDPRFNV (80 aa)). The region spanning 211 to 246 (RPYIAQLTRDMKEASAELEFEKAARLRDQIQMLETV) is the UVR domain. The segment at 557–577 (ANGNDNGEGGSDISGKGHAVP) is disordered.

Belongs to the UvrC family. As to quaternary structure, interacts with UvrB in an incision complex.

The protein localises to the cytoplasm. Functionally, the UvrABC repair system catalyzes the recognition and processing of DNA lesions. UvrC both incises the 5' and 3' sides of the lesion. The N-terminal half is responsible for the 3' incision and the C-terminal half is responsible for the 5' incision. This chain is UvrABC system protein C, found in Bifidobacterium longum (strain DJO10A).